Consider the following 405-residue polypeptide: Imidazolonepropionase (405 aa).

Histidine 73 and histidine 75 together coordinate Fe(3+). Zn(2+) is bound by residues histidine 73 and histidine 75. 4-imidazolone-5-propanoate contacts are provided by arginine 82, tyrosine 145, and histidine 178. Tyrosine 145 contributes to the N-formimidoyl-L-glutamate binding site. Position 243 (histidine 243) interacts with Fe(3+). Residue histidine 243 participates in Zn(2+) binding. Glutamine 246 contacts 4-imidazolone-5-propanoate. Aspartate 318 contributes to the Fe(3+) binding site. Aspartate 318 serves as a coordination point for Zn(2+). The N-formimidoyl-L-glutamate site is built by asparagine 320 and glycine 322. Threonine 323 is a binding site for 4-imidazolone-5-propanoate.

This sequence belongs to the metallo-dependent hydrolases superfamily. HutI family. Requires Zn(2+) as cofactor. The cofactor is Fe(3+).

It is found in the cytoplasm. It catalyses the reaction 4-imidazolone-5-propanoate + H2O = N-formimidoyl-L-glutamate. It participates in amino-acid degradation; L-histidine degradation into L-glutamate; N-formimidoyl-L-glutamate from L-histidine: step 3/3. Catalyzes the hydrolytic cleavage of the carbon-nitrogen bond in imidazolone-5-propanoate to yield N-formimidoyl-L-glutamate. It is the third step in the universal histidine degradation pathway. The polypeptide is Imidazolonepropionase (Brucella anthropi (strain ATCC 49188 / DSM 6882 / CCUG 24695 / JCM 21032 / LMG 3331 / NBRC 15819 / NCTC 12168 / Alc 37) (Ochrobactrum anthropi)).